Consider the following 874-residue polypeptide: Alanine--tRNA ligase (874 aa).

Zn(2+) contacts are provided by His562, His566, Cys664, and His668.

Belongs to the class-II aminoacyl-tRNA synthetase family. It depends on Zn(2+) as a cofactor.

It is found in the cytoplasm. The catalysed reaction is tRNA(Ala) + L-alanine + ATP = L-alanyl-tRNA(Ala) + AMP + diphosphate. In terms of biological role, catalyzes the attachment of alanine to tRNA(Ala) in a two-step reaction: alanine is first activated by ATP to form Ala-AMP and then transferred to the acceptor end of tRNA(Ala). Also edits incorrectly charged Ser-tRNA(Ala) and Gly-tRNA(Ala) via its editing domain. The protein is Alanine--tRNA ligase of Shewanella loihica (strain ATCC BAA-1088 / PV-4).